Here is a 256-residue protein sequence, read N- to C-terminus: Deoxyribose-phosphate aldolase (256 aa).

Aspartate 102 acts as the Proton donor/acceptor in catalysis. Residue lysine 165 is the Schiff-base intermediate with acetaldehyde of the active site. The active-site Proton donor/acceptor is the lysine 197.

It belongs to the DeoC/FbaB aldolase family. DeoC type 2 subfamily.

It is found in the cytoplasm. The catalysed reaction is 2-deoxy-D-ribose 5-phosphate = D-glyceraldehyde 3-phosphate + acetaldehyde. It participates in carbohydrate degradation; 2-deoxy-D-ribose 1-phosphate degradation; D-glyceraldehyde 3-phosphate and acetaldehyde from 2-deoxy-alpha-D-ribose 1-phosphate: step 2/2. Catalyzes a reversible aldol reaction between acetaldehyde and D-glyceraldehyde 3-phosphate to generate 2-deoxy-D-ribose 5-phosphate. The sequence is that of Deoxyribose-phosphate aldolase from Shewanella sp. (strain ANA-3).